A 45-amino-acid polypeptide reads, in one-letter code: Large ribosomal subunit protein bL34 (45 aa).

A compositionally biased stretch (polar residues) spans 1–10 (MTQRTLGGTN). A disordered region spans residues 1–45 (MTQRTLGGTNRKQKRTSGFRARMRTHNGRKVIQARRSKGRHRLAV). The span at 11–45 (RKQKRTSGFRARMRTHNGRKVIQARRSKGRHRLAV) shows a compositional bias: basic residues.

This sequence belongs to the bacterial ribosomal protein bL34 family.

The protein is Large ribosomal subunit protein bL34 (rpmH) of Synechocystis sp. (strain ATCC 27184 / PCC 6803 / Kazusa).